A 1105-amino-acid polypeptide reads, in one-letter code: AP-3 complex subunit beta-1 (1105 aa).

Disordered regions lie at residues 1-26 (MSSN…EATS) and 271-292 (KNFY…KKSY). Phosphoserine occurs at positions 276 and 610. Positions 668 to 824 (KKEKPMKKFY…KPQQERHPPS (157 aa)) are disordered. A compositionally biased stretch (acidic residues) spans 679–704 (ESEEEEDEDEDEDEEEEEKEDEDENP). Low complexity-rich tracts occupy residues 705–722 (SDSS…SGDT) and 730–741 (DSSSGQDSETGS). Residues 750-759 (VAKRNSKTKR) show a composition bias toward basic residues. Positions 760-774 (KSDSENREKKNENSK) are enriched in basic and acidic residues. Phosphoserine occurs at positions 761 and 763. Low complexity predominate over residues 775–788 (ASESSSEESSSMED). The segment covering 789–799 (SSSESESESGS) has biased composition (acidic residues). A compositionally biased stretch (basic and acidic residues) spans 811-824 (AKERKPQQERHPPS).

The protein belongs to the adaptor complexes large subunit family. Adaptor protein complex 3 (AP-3) is a heterotetramer composed of two large adaptins (delta-type subunit AP3D1 and beta-type subunit AP3B1 or AP3B2), a medium adaptin (mu-type subunit AP3M1 or AP3M2) and a small adaptin (sigma-type subunit APS1 or AP3S2). AP-3 associates with the BLOC-1 complex. Interacts with KIF3A; interaction is direct; interaction is impaired by pyrophosphorylation of AP3B1. Phosphorylated on serine residues. Post-translationally, pyrophosphorylated by 5-diphosphoinositol pentakisphosphate (5-IP7). Pyrophosphorylation impairs interaction with KIF3A. Serine pyrophosphorylation is achieved by Mg(2+)-dependent, but enzyme independent transfer of a beta-phosphate from a inositol pyrophosphate to a pre-phosphorylated serine residue. As to expression, ubiquitously expressed.

The protein localises to the cytoplasmic vesicle. It localises to the clathrin-coated vesicle membrane. It is found in the golgi apparatus. Functionally, subunit of non-clathrin- and clathrin-associated adaptor protein complex 3 (AP-3) that plays a role in protein sorting in the late-Golgi/trans-Golgi network (TGN) and/or endosomes. The AP complexes mediate both the recruitment of clathrin to membranes and the recognition of sorting signals within the cytosolic tails of transmembrane cargo molecules. AP-3 appears to be involved in the sorting of a subset of transmembrane proteins targeted to lysosomes and lysosome-related organelles. In concert with the BLOC-1 complex, AP-3 is required to target cargos into vesicles assembled at cell bodies for delivery into neurites and nerve terminals. This Mus musculus (Mouse) protein is AP-3 complex subunit beta-1 (Ap3b1).